Consider the following 358-residue polypeptide: Aminodeoxyfutalosine deaminase (358 aa).

Positions 32 and 34 each coordinate Zn(2+). Residues Arg-87, Asp-154, and Gly-188 each contribute to the substrate site. His-215 contributes to the Zn(2+) binding site. The active-site Proton donor is Glu-218. Asp-296 serves as a coordination point for Zn(2+).

The protein belongs to the metallo-dependent hydrolases superfamily. Adenosine and AMP deaminases family. The cofactor is Zn(2+).

It catalyses the reaction 6-amino-6-deoxyfutalosine + H2O + H(+) = futalosine + NH4(+). It functions in the pathway quinol/quinone metabolism; menaquinone biosynthesis. In terms of biological role, catalyzes the deamination of aminodeoxyfutalosine (AFL) into futalosine (FL), a step in the biosynthesis of menaquinone (MK, vitamin K2). To a lesser extent, can also deaminate adenosine, 5'-methylthioadenosine, 5'-deoxyadenosine, and 2'-deoxyadenosine. The polypeptide is Aminodeoxyfutalosine deaminase (add2) (Streptomyces avermitilis (strain ATCC 31267 / DSM 46492 / JCM 5070 / NBRC 14893 / NCIMB 12804 / NRRL 8165 / MA-4680)).